The following is a 291-amino-acid chain: MYEHINLITAIITPFNAENEIDYPALDRVIDHLLETGTQGLVIAGTTGESPTLSHEEKLALTQHIAAYVPVDTLLIANAGTNNTVESVRNARELSEIPNVDAILAVTPYYNKPNQRGMIAHFTAIADASNRPVMLYNIPGRSAVGLTVDSVVTLAQHPNINAIKETTSVAFIAAEIEQTQNDDFAVYTGEDAQTLAAFVHGGAGTISVASHLYGREMSALFTALAVGDWQEAGVLQRYLTPKMNALFAFPSPAPVKAKLHDLDMVENLTRQPILPLNVAEKKALDKLLEDM.

Thr47 serves as a coordination point for pyruvate. The active-site Proton donor/acceptor is Tyr136. Lys164 (schiff-base intermediate with substrate) is an active-site residue. Ile206 contacts pyruvate.

This sequence belongs to the DapA family. Homotetramer; dimer of dimers.

It localises to the cytoplasm. The catalysed reaction is L-aspartate 4-semialdehyde + pyruvate = (2S,4S)-4-hydroxy-2,3,4,5-tetrahydrodipicolinate + H2O + H(+). Its pathway is amino-acid biosynthesis; L-lysine biosynthesis via DAP pathway; (S)-tetrahydrodipicolinate from L-aspartate: step 3/4. In terms of biological role, catalyzes the condensation of (S)-aspartate-beta-semialdehyde [(S)-ASA] and pyruvate to 4-hydroxy-tetrahydrodipicolinate (HTPA). The polypeptide is 4-hydroxy-tetrahydrodipicolinate synthase (Leuconostoc citreum (strain KM20)).